A 165-amino-acid polypeptide reads, in one-letter code: Growth arrest and DNA damage-inducible protein GADD45 alpha (165 aa).

Residue Thr-2 is modified to Phosphothreonine.

It belongs to the GADD45 family. As to quaternary structure, interacts with AURKA, PCNA, GADD45GIP1 and MAPK14.

It localises to the nucleus. Might affect PCNA interaction with some CDK (cell division protein kinase) complexes; stimulates DNA excision repair in vitro and inhibits entry of cells into S phase. In T-cells, functions as a regulator of p38 MAPKs by inhibiting p88 phosphorylation and activity. This chain is Growth arrest and DNA damage-inducible protein GADD45 alpha (GADD45A), found in Felis catus (Cat).